Consider the following 243-residue polypeptide: Lectin-4 (243 aa).

Position 1 is a pyrrolidone carboxylic acid (glutamine 1). The N-linked (GlcNAc...) asparagine; in alpha chain glycan is linked to asparagine 5. Residue asparagine 18 is glycosylated (N-linked (GlcNAc...) asparagine). 2 residues coordinate Mn(2+): glutamate 129 and aspartate 131. Residues aspartate 131, tryptophan 133, asparagine 135, and aspartate 140 each coordinate Ca(2+). Residues aspartate 140 and histidine 145 each contribute to the Mn(2+) site.

This sequence belongs to the leguminous lectin family. As to quaternary structure, homodimer of Alpha and Beta forms. Post-translationally, N-glycosylation of Asn-5 converts form Beta to form Alpha.

Its function is as follows. Lectin which has a strong affinity for both the Lewis b and y human blood-group determinants. The chain is Lectin-4 from Griffonia simplicifolia (Bandeiraea simplicifolia).